Reading from the N-terminus, the 29-residue chain is Dermaseptin-H7 (29 aa).

The residue at position 29 (Leu-29) is a Leucine amide.

It belongs to the frog skin active peptide (FSAP) family. Dermaseptin subfamily. In terms of tissue distribution, expressed by the skin glands.

It is found in the secreted. Its function is as follows. Has antibacterial activity against the Gram-negative bacterium E.coli and the Gram-positive bacterium S.aureus. Has antiprotozoal activity against L.amazonensis. Has antifungal activity. Has no hemolytic activity. The protein is Dermaseptin-H7 of Pithecopus hypochondrialis (Orange-legged leaf frog).